We begin with the raw amino-acid sequence, 229 residues long: Platelet-activating factor acetylhydrolase IB subunit alpha2 (229 aa).

The residue at position 2 (Ser2) is an N-acetylserine. Residue Ser2 is modified to Phosphoserine. Ser48 is an active-site residue. Ser64 bears the Phosphoserine mark. Residues Asp193 and His196 contribute to the active site. Thr220 is modified (phosphothreonine).

The protein belongs to the 'GDSL' lipolytic enzyme family. Platelet-activating factor acetylhydrolase IB beta/gamma subunits subfamily. Forms a catalytic dimer which is either homodimer (alpha2/alpha2 homodimer) or heterodimer with PAFAH1B3 (alpha2/alpha1 heterodimer). Component of the cytosolic (PAF-AH (I)) heterotetrameric enzyme, which is composed of PAFAH1B1 (beta), PAFAH1B2 (alpha2) and PAFAH1B3 (alpha1) subunits. The catalytic activity of the enzyme resides in the alpha1 (PAFAH1B3) and alpha2 (PAFAH1B2) subunits, whereas the beta subunit (PAFAH1B1) has regulatory activity. Trimer formation is not essential for the catalytic activity. Interacts (homodimer form) with PAFAH1B1 (homodimer form); PAFAH1B2 competes with NDEL1 for PAFAH1B1 binding. Interacts with VLDLR; this interaction may modulate the Reelin pathway.

Its subcellular location is the cytoplasm. The catalysed reaction is a 1-O-alkyl-2-acetyl-sn-glycero-3-phosphocholine + H2O = a 1-O-alkyl-sn-glycero-3-phosphocholine + acetate + H(+). The enzyme catalyses 1-O-hexadecyl-2-acetyl-sn-glycero-3-phosphocholine + H2O = 1-O-hexadecyl-sn-glycero-3-phosphocholine + acetate + H(+). It catalyses the reaction 1-O-hexadecyl-2-acetyl-sn-glycero-3-phosphate + H2O = 1-O-hexadecyl-sn-glycero-3-phosphate + acetate + H(+). It carries out the reaction 1-O-hexadecyl-2-acetyl-sn-glycero-3-phosphoethanolamine + H2O = 1-O-hexadecyl-sn-glycero-3-phosphoethanolamine + acetate + H(+). Beta subunit (PAFAH1B1) stimulates the acetylhydrolase activity of the alpha2/alpha2 catalytic homodimer. Functionally, alpha2 catalytic subunit of the cytosolic type I platelet-activating factor (PAF) acetylhydrolase (PAF-AH (I)) heterotetrameric enzyme that catalyzes the hydrolyze of the acetyl group at the sn-2 position of PAF and its analogs and modulates the action of PAF. The activity and substrate specificity of PAF-AH (I) are affected by its subunit composition. The alpha2/alpha2 homodimer (PAFAH1B2/PAFAH1B2 homodimer) hydrolyzes PAF and 1-O-alkyl-2-acetyl-sn-glycero-3-phosphorylethanolamine (AAGPE) more efficiently than 1-O-alkyl-2-acetyl-sn-glycero-3-phosphoric acid (AAGPA). In contrast, the alpha1/alpha2 heterodimer(PAFAH1B3/PAFAH1B3 heterodimer) hydrolyzes AAGPA more efficiently than PAF, but has little hydrolytic activity towards AAGPE. May play a role in male germ cell meiosis during the late pachytenestage and meiotic divisions as well as early spermiogenesis. This Mus musculus (Mouse) protein is Platelet-activating factor acetylhydrolase IB subunit alpha2.